An 830-amino-acid polypeptide reads, in one-letter code: Ent-cassa-12,15-diene synthase (830 aa).

The disordered stretch occupies residues 1-50; it reads MMLLGSPSSGGYGGKFAGASPAGGTTTMAPSAKQPSSRAPPPGITGGRND. The span at 23 to 37 shows a compositional bias: polar residues; the sequence is GGTTTMAPSAKQPSS. The Mg(2+) site is built by aspartate 577, aspartate 581, asparagine 721, and glutamate 729. The DDXXD motif motif lies at 577 to 581; that stretch reads DDLFD.

It belongs to the terpene synthase family. Mg(2+) is required as a cofactor. As to expression, expressed in roots and stems.

It carries out the reaction ent-copalyl diphosphate = ent-cassa-12,15-diene + diphosphate. Its function is as follows. Involved in phytocassane phytoalexins biosynthesis. Catalyzes the conversion of ent-copalyl diphosphate to the phytoalexin precursor ent-cassa-12,15-diene. The sequence is that of Ent-cassa-12,15-diene synthase (KSL7) from Oryza sativa subsp. indica (Rice).